The sequence spans 200 residues: MSFNLGKSLTKLIIASNNDGKIEEFIQLLSGIPLVVMGQPKHLEVEETGVSFAENARIKAIAVAKATGEMALADDSGLSVGSLGGAPGVFSARYANTDLERVSRLLKELEMVDDRSAFFSAALCLASSKGEVLLELDGRCDGIITTTPRGKFGFGYDPIFEVKGTGLTFSEMDSKQKRELSHRGLAVKKLIPSLKKILDS.

Residue 16–21 participates in substrate binding; that stretch reads SNNDGK. Positions 46 and 75 each coordinate Mg(2+). D75 functions as the Proton acceptor in the catalytic mechanism. Residues S76, 154-157, K177, and 182-183 each bind substrate; these read FGYD and HR.

This sequence belongs to the HAM1 NTPase family. In terms of assembly, homodimer. The cofactor is Mg(2+).

The enzyme catalyses XTP + H2O = XMP + diphosphate + H(+). It carries out the reaction dITP + H2O = dIMP + diphosphate + H(+). It catalyses the reaction ITP + H2O = IMP + diphosphate + H(+). Functionally, pyrophosphatase that catalyzes the hydrolysis of nucleoside triphosphates to their monophosphate derivatives, with a high preference for the non-canonical purine nucleotides XTP (xanthosine triphosphate), dITP (deoxyinosine triphosphate) and ITP. Seems to function as a house-cleaning enzyme that removes non-canonical purine nucleotides from the nucleotide pool, thus preventing their incorporation into DNA/RNA and avoiding chromosomal lesions. The chain is dITP/XTP pyrophosphatase from Prochlorococcus marinus (strain SARG / CCMP1375 / SS120).